Reading from the N-terminus, the 250-residue chain is Isoprenyl transferase (250 aa).

Asp-27 is an active-site residue. Asp-27 lines the Mg(2+) pocket. Substrate contacts are provided by residues 28–31, Trp-32, His-48, and 76–78; these read GNRR and STE. The Proton acceptor role is filled by Asn-79. Residues Phe-80, Arg-82, Arg-199, and 205–207 each bind substrate; that span reads RVS. Glu-218 contacts Mg(2+).

Belongs to the UPP synthase family. Homodimer. Mg(2+) serves as cofactor.

Functionally, catalyzes the condensation of isopentenyl diphosphate (IPP) with allylic pyrophosphates generating different type of terpenoids. This is Isoprenyl transferase from Chlamydia caviae (strain ATCC VR-813 / DSM 19441 / 03DC25 / GPIC) (Chlamydophila caviae).